A 77-amino-acid polypeptide reads, in one-letter code: Large ribosomal subunit protein uL29 (77 aa).

Belongs to the universal ribosomal protein uL29 family.

The chain is Large ribosomal subunit protein uL29 from Mycobacterium sp. (strain JLS).